Reading from the N-terminus, the 611-residue chain is Leukotriene A-4 hydrolase (611 aa).

Residue Lys-73 is modified to N6-acetyllysine. Residues 135–137 (QCQ) and 267–272 (PYGGME) contribute to the a peptide site. His-296 contacts Zn(2+). The Proton acceptor role is filled by Glu-297. 2 residues coordinate Zn(2+): His-300 and Glu-319. Lys-337 is subject to N6-acetyllysine. Tyr-384 functions as the Proton donor in the catalytic mechanism. Position 414 is an N6-acetyllysine (Lys-414). A Phosphoserine modification is found at Ser-416. An a peptide-binding site is contributed by 564-566 (RMK). N6-acetyllysine is present on Lys-573.

This sequence belongs to the peptidase M1 family. Monomer. The cofactor is Zn(2+). Phosphorylation at Ser-416 inhibits leukotriene-A4 hydrolase activity.

Its subcellular location is the cytoplasm. The catalysed reaction is leukotriene A4 + H2O = leukotriene B4. The enzyme catalyses (5S,6S)-epoxy-(18R)-hydroxy-(7E,9E,11Z,14Z,16E)-eicosapentaenoate + H2O = resolvin E1. It catalyses the reaction (5S,6S)-epoxy-(18S)-hydroxy-(7E,9E,11Z,14Z,16E)-eicosapentaenoate + H2O = 18S-resolvin E1. It carries out the reaction Release of the N-terminal residue from a tripeptide.. Its pathway is lipid metabolism; leukotriene B4 biosynthesis. Its activity is regulated as follows. Inhibited by bestatin. Inhibited by captopril. The epoxide hydrolase activity is restrained by suicide inactivation that involves binding of LTA4 to Tyr-379. 4-(4-benzylphenyl)thiazol-2-amine (ARM1) selectively inhibits the epoxide hydrolase activity. Functionally, bifunctional zinc metalloenzyme that comprises both epoxide hydrolase (EH) and aminopeptidase activities. Acts as an epoxide hydrolase to catalyze the conversion of LTA4 to the pro-inflammatory mediator leukotriene B4 (LTB4). Also has aminopeptidase activity, with high affinity for N-terminal arginines of various synthetic tripeptides. In addition to its pro-inflammatory EH activity, may also counteract inflammation by its aminopeptidase activity, which inactivates by cleavage another neutrophil attractant, the tripeptide Pro-Gly-Pro (PGP), a bioactive fragment of collagen generated by the action of matrix metalloproteinase-9 (MMP9) and prolylendopeptidase (PREPL). Involved also in the biosynthesis of resolvin E1 and 18S-resolvin E1 from eicosapentaenoic acid, two lipid mediators that show potent anti-inflammatory and pro-resolving actions. The polypeptide is Leukotriene A-4 hydrolase (Lta4h) (Rattus norvegicus (Rat)).